The following is a 143-amino-acid chain: Ribonuclease HI (143 aa).

The RNase H type-1 domain maps to 1–136 (MQEIEIFCDG…CNSLAKLEAQ (136 aa)). Mg(2+) contacts are provided by Asp9, Glu47, Asp69, and Asn128.

Belongs to the RNase H family. In terms of assembly, monomer. Requires Mg(2+) as cofactor.

Its subcellular location is the cytoplasm. It catalyses the reaction Endonucleolytic cleavage to 5'-phosphomonoester.. Its function is as follows. Endonuclease that specifically degrades the RNA of RNA-DNA hybrids. The sequence is that of Ribonuclease HI (rnhA) from Helicobacter pylori (strain J99 / ATCC 700824) (Campylobacter pylori J99).